A 748-amino-acid chain; its full sequence is Proton-associated sugar transporter A (748 aa).

6 helical membrane-spanning segments follow: residues 93–113, 123–143, 155–175, 191–211, 233–253, and 268–288; these read ILFG…PVLL, SLVW…LGAW, RPFI…LLNG, WGLL…DSAD, IHAL…GIHW, and VIYL…LVSI. The segment at 294-339 is disordered; sequence RPPSEKRAAMKSPSLPLPPSPPVLPEEGPGDSLPSHTATNFSSPIS. The segment covering 308–317 has biased composition (pro residues); that stretch reads LPLPPSPPVL. Thr-497 bears the Phosphothreonine mark. A run of 6 helical transmembrane segments spans residues 533–553, 573–593, 600–620, 627–647, 685–705, and 708–728; these read GWLS…EVVF, VTMG…YSAI, FLSV…GTGL, LYVV…LCTL, FLAQ…VGSA, and VMYF…LFVI.

The protein belongs to the glycoside-pentoside-hexuronide (GPH) cation symporter transporter (TC 2.A.2) family. Expressed in adult heart, brain, muscle and kidney, with very strong expression in brain. Also expressed in fetal brain, kidney and lung.

The protein resides in the membrane. The catalysed reaction is D-galactose(in) + H(+)(in) = D-galactose(out) + H(+)(out). The enzyme catalyses D-glucose(out) + H(+)(out) = D-glucose(in) + H(+)(in). In terms of biological role, proton-associated glucose transporter in the brain. This chain is Proton-associated sugar transporter A, found in Homo sapiens (Human).